The following is a 128-amino-acid chain: Small ribosomal subunit protein uS13 (128 aa).

The span at 95 to 118 shows a compositional bias: basic residues; that stretch reads GLPVRGQRTHTNARTRKGPKKGLV. The disordered stretch occupies residues 95 to 128; the sequence is GLPVRGQRTHTNARTRKGPKKGLVRKAAAPAPKA.

This sequence belongs to the universal ribosomal protein uS13 family. As to quaternary structure, part of the 30S ribosomal subunit. Forms a loose heterodimer with protein S19. Forms two bridges to the 50S subunit in the 70S ribosome.

Located at the top of the head of the 30S subunit, it contacts several helices of the 16S rRNA. In the 70S ribosome it contacts the 23S rRNA (bridge B1a) and protein L5 of the 50S subunit (bridge B1b), connecting the 2 subunits; these bridges are implicated in subunit movement. Contacts the tRNAs in the A and P-sites. The protein is Small ribosomal subunit protein uS13 of Anaeromyxobacter sp. (strain K).